The chain runs to 352 residues: Nicotinate-nucleotide--dimethylbenzimidazole phosphoribosyltransferase (352 aa).

The Proton acceptor role is filled by Glu-318.

It belongs to the CobT family.

The enzyme catalyses 5,6-dimethylbenzimidazole + nicotinate beta-D-ribonucleotide = alpha-ribazole 5'-phosphate + nicotinate + H(+). It participates in nucleoside biosynthesis; alpha-ribazole biosynthesis; alpha-ribazole from 5,6-dimethylbenzimidazole: step 1/2. Its function is as follows. Catalyzes the synthesis of alpha-ribazole-5'-phosphate from nicotinate mononucleotide (NAMN) and 5,6-dimethylbenzimidazole (DMB). This is Nicotinate-nucleotide--dimethylbenzimidazole phosphoribosyltransferase from Dehalococcoides mccartyi (strain CBDB1).